The sequence spans 1071 residues: DNA-directed RNA polymerase subunit beta (1071 aa).

The protein belongs to the RNA polymerase beta chain family. In plastids the minimal PEP RNA polymerase catalytic core is composed of four subunits: alpha, beta, beta', and beta''. When a (nuclear-encoded) sigma factor is associated with the core the holoenzyme is formed, which can initiate transcription.

It is found in the plastid. The protein localises to the chloroplast. It catalyses the reaction RNA(n) + a ribonucleoside 5'-triphosphate = RNA(n+1) + diphosphate. In terms of biological role, DNA-dependent RNA polymerase catalyzes the transcription of DNA into RNA using the four ribonucleoside triphosphates as substrates. The polypeptide is DNA-directed RNA polymerase subunit beta (Nymphaea alba (White water-lily)).